Here is a 373-residue protein sequence, read N- to C-terminus: Inhibitor of nuclear factor kappa-B kinase-interacting protein (373 aa).

Positions methionine 1–glycine 11 are enriched in basic residues. Residues methionine 1–alanine 38 are disordered. The segment covering glutamate 18–glycine 33 has biased composition (basic and acidic residues). Residues glycine 43–valine 59 form a helical membrane-spanning segment. 2 coiled-coil regions span residues leucine 86–serine 257 and glutamine 285–glycine 324. N-linked (GlcNAc...) asparagine glycosylation is present at asparagine 151.

Post-translationally, N-glycosylated at Asn-151.

Its subcellular location is the endoplasmic reticulum membrane. Its function is as follows. Target of p53/TP53 with pro-apoptotic function. The protein is Inhibitor of nuclear factor kappa-B kinase-interacting protein (Ikbip) of Mus musculus (Mouse).